The sequence spans 164 residues: Shikimate kinase (164 aa).

11–16 (GSGKST) is a binding site for ATP. Serine 15 contacts Mg(2+). Positions 33, 57, and 79 each coordinate substrate. ATP is bound at residue arginine 117. Position 134 (arginine 134) interacts with substrate.

The protein belongs to the shikimate kinase family. As to quaternary structure, monomer. Mg(2+) is required as a cofactor.

The protein localises to the cytoplasm. It carries out the reaction shikimate + ATP = 3-phosphoshikimate + ADP + H(+). The protein operates within metabolic intermediate biosynthesis; chorismate biosynthesis; chorismate from D-erythrose 4-phosphate and phosphoenolpyruvate: step 5/7. Catalyzes the specific phosphorylation of the 3-hydroxyl group of shikimic acid using ATP as a cosubstrate. This is Shikimate kinase from Persephonella marina (strain DSM 14350 / EX-H1).